An 86-amino-acid polypeptide reads, in one-letter code: Immunity protein CdiI-1 (86 aa).

As to quaternary structure, interacts with the C-terminal fragment (CT) of cognate toxin protein CdiA-EC869.

Its function is as follows. Immunity protein component of a toxin-immunity protein module, which functions as a cellular contact-dependent growth inhibition (CDI) system. CDI modules allow bacteria to communicate with and inhibit the growth of closely related neighboring bacteria in a contact-dependent fashion. Neutralizes the toxic activity of cognate toxin CdiA-EC869 (the C-terminal 289 residue CT fragment). Does not inhibit toxic activity of CdiA from other toxin-immunity modules or strains of E.coli. The chain is Immunity protein CdiI-1 from Escherichia coli O157:H7 (strain EC869).